The sequence spans 698 residues: Sulfhydryl oxidase 2 (698 aa).

The signal sequence occupies residues Met-1–Arg-21. Positions Pro-34–Asn-178 constitute a Thioredoxin domain. A glycan (N-linked (GlcNAc...) asparagine) is linked at Asn-77. Active-site nucleophile residues include Cys-91 and Cys-94. Cystine bridges form between Cys-91-Cys-94 and Cys-122-Cys-131. N-linked (GlcNAc...) asparagine glycosylation is found at Asn-178, Asn-218, and Asn-266. An intrachain disulfide couples Cys-418 to Cys-430. One can recognise an ERV/ALR sulfhydryl oxidase domain in the interval Ser-421–Trp-530. Residues Arg-426, Trp-433, His-437, Glu-478, His-482, Trp-505–Asn-512, Lys-527, and Trp-530 contribute to the FAD site. A disulfide bond links Cys-476 and Cys-479. The cysteines at positions 536 and 539 are disulfide-linked. Residues Thr-570–Ser-624 form a disordered region. The span at Ser-572–Gly-581 shows a compositional bias: polar residues. Residue Ser-579 is modified to Phosphoserine. Positions Arg-586 to Gln-607 are enriched in basic and acidic residues. The span at Arg-610–Pro-622 shows a compositional bias: low complexity. A helical membrane pass occupies residues Ser-662–Phe-682.

It belongs to the quiescin-sulfhydryl oxidase (QSOX) family. FAD serves as cofactor. Expressed in pancreas, brain, placenta, kidney, heart and fetal tissues. Weakly expressed in lung, liver and skeletal muscles.

It is found in the membrane. The protein localises to the secreted. Its subcellular location is the cell membrane. It localises to the nucleus membrane. The enzyme catalyses 2 R'C(R)SH + O2 = R'C(R)S-S(R)CR' + H2O2. Its function is as follows. Catalyzes the oxidation of sulfhydryl groups in peptide and protein thiols to disulfides with the reduction of oxygen to hydrogen peroxide. May contribute to disulfide bond formation in a variety of secreted proteins. Also seems to play a role in regulating the sensitization of neuroblastoma cells for interferon-gamma-induced apoptosis. In Homo sapiens (Human), this protein is Sulfhydryl oxidase 2 (QSOX2).